A 662-amino-acid polypeptide reads, in one-letter code: DNA topoisomerase 4 subunit B (662 aa).

ATP-binding positions include Y20, N60, D87, 129–135, and K359; that span reads GLHGVGI. The Toprim domain occupies 439–553; the sequence is TELFIVEGDS…EGHLYLAKPP (115 aa). Positions 445, 518, and 520 each coordinate Mg(2+).

It belongs to the type II topoisomerase family. ParE type 1 subfamily. In terms of assembly, heterotetramer composed of ParC and ParE. Mg(2+) serves as cofactor. Requires Mn(2+) as cofactor. It depends on Ca(2+) as a cofactor.

It carries out the reaction ATP-dependent breakage, passage and rejoining of double-stranded DNA.. Topoisomerase IV is essential for chromosome segregation. It relaxes supercoiled DNA. Performs the decatenation events required during the replication of a circular DNA molecule. This chain is DNA topoisomerase 4 subunit B, found in Rickettsia conorii (strain ATCC VR-613 / Malish 7).